The sequence spans 550 residues: Arginine--tRNA ligase (550 aa).

The short motif at 130 to 140 (ANPTGPIHLGG) is the 'HIGH' region element.

This sequence belongs to the class-I aminoacyl-tRNA synthetase family. As to quaternary structure, monomer.

It is found in the cytoplasm. The enzyme catalyses tRNA(Arg) + L-arginine + ATP = L-arginyl-tRNA(Arg) + AMP + diphosphate. In Corynebacterium efficiens (strain DSM 44549 / YS-314 / AJ 12310 / JCM 11189 / NBRC 100395), this protein is Arginine--tRNA ligase.